Reading from the N-terminus, the 194-residue chain is Glycerol-3-phosphate acyltransferase (194 aa).

The next 6 membrane-spanning stretches (helical) occupy residues 2 to 22 (AFFCFIVLTYFIGAIPSGVWI), 52 to 72 (LGVAVLIMDVLKGFIPLYIAS), 80 to 100 (DLVILGLVAILAHTFSCFISF), 112 to 132 (VFLFLIPVITLILLAIFILVA), 137 to 157 (YVSLASITAAFLLPIFTFFTH), and 161 to 181 (YLFALSVIIAVFVIYRHKTNI).

It belongs to the PlsY family. In terms of assembly, probably interacts with PlsX.

The protein localises to the cell inner membrane. It catalyses the reaction an acyl phosphate + sn-glycerol 3-phosphate = a 1-acyl-sn-glycero-3-phosphate + phosphate. It functions in the pathway lipid metabolism; phospholipid metabolism. Catalyzes the transfer of an acyl group from acyl-phosphate (acyl-PO(4)) to glycerol-3-phosphate (G3P) to form lysophosphatidic acid (LPA). This enzyme utilizes acyl-phosphate as fatty acyl donor, but not acyl-CoA or acyl-ACP. This is Glycerol-3-phosphate acyltransferase from Fusobacterium nucleatum subsp. nucleatum (strain ATCC 25586 / DSM 15643 / BCRC 10681 / CIP 101130 / JCM 8532 / KCTC 2640 / LMG 13131 / VPI 4355).